Reading from the N-terminus, the 399-residue chain is 4-hydroxy-3-methylbut-2-enyl diphosphate reductase (399 aa).

Cys66 contacts [4Fe-4S] cluster. Residue His96 coordinates (2E)-4-hydroxy-3-methylbut-2-enyl diphosphate. His96 is a dimethylallyl diphosphate binding site. Position 96 (His96) interacts with isopentenyl diphosphate. Residue Cys157 coordinates [4Fe-4S] cluster. His185 contacts (2E)-4-hydroxy-3-methylbut-2-enyl diphosphate. His185 lines the dimethylallyl diphosphate pocket. Position 185 (His185) interacts with isopentenyl diphosphate. Glu187 serves as the catalytic Proton donor. Thr250 provides a ligand contact to (2E)-4-hydroxy-3-methylbut-2-enyl diphosphate. Cys288 contributes to the [4Fe-4S] cluster binding site. (2E)-4-hydroxy-3-methylbut-2-enyl diphosphate-binding residues include Ser317, Ser318, Asn319, and Ser380. Dimethylallyl diphosphate contacts are provided by Ser317, Ser318, Asn319, and Ser380. Isopentenyl diphosphate-binding residues include Ser317, Ser318, Asn319, and Ser380.

This sequence belongs to the IspH family. Requires [4Fe-4S] cluster as cofactor.

The catalysed reaction is isopentenyl diphosphate + 2 oxidized [2Fe-2S]-[ferredoxin] + H2O = (2E)-4-hydroxy-3-methylbut-2-enyl diphosphate + 2 reduced [2Fe-2S]-[ferredoxin] + 2 H(+). It catalyses the reaction dimethylallyl diphosphate + 2 oxidized [2Fe-2S]-[ferredoxin] + H2O = (2E)-4-hydroxy-3-methylbut-2-enyl diphosphate + 2 reduced [2Fe-2S]-[ferredoxin] + 2 H(+). It functions in the pathway isoprenoid biosynthesis; dimethylallyl diphosphate biosynthesis; dimethylallyl diphosphate from (2E)-4-hydroxy-3-methylbutenyl diphosphate: step 1/1. The protein operates within isoprenoid biosynthesis; isopentenyl diphosphate biosynthesis via DXP pathway; isopentenyl diphosphate from 1-deoxy-D-xylulose 5-phosphate: step 6/6. Functionally, catalyzes the conversion of 1-hydroxy-2-methyl-2-(E)-butenyl 4-diphosphate (HMBPP) into a mixture of isopentenyl diphosphate (IPP) and dimethylallyl diphosphate (DMAPP). Acts in the terminal step of the DOXP/MEP pathway for isoprenoid precursor biosynthesis. This Parasynechococcus marenigrum (strain WH8102) protein is 4-hydroxy-3-methylbut-2-enyl diphosphate reductase.